A 354-amino-acid polypeptide reads, in one-letter code: NADH-quinone oxidoreductase subunit H (354 aa).

A run of 8 helical transmembrane segments spans residues 25-45 (LVRI…LILW), 91-111 (WIYL…WAVI), 126-146 (LLYA…AGWA), 170-190 (MGFA…SGIV), 205-225 (FLSW…ISGI), 267-287 (IVIS…PFGF), 290-310 (FVPG…VFIW), and 330-350 (IFIP…MSPL).

The protein belongs to the complex I subunit 1 family. In terms of assembly, NDH-1 is composed of 14 different subunits. Subunits NuoA, H, J, K, L, M, N constitute the membrane sector of the complex.

It is found in the cell inner membrane. It carries out the reaction a quinone + NADH + 5 H(+)(in) = a quinol + NAD(+) + 4 H(+)(out). In terms of biological role, NDH-1 shuttles electrons from NADH, via FMN and iron-sulfur (Fe-S) centers, to quinones in the respiratory chain. The immediate electron acceptor for the enzyme in this species is believed to be ubiquinone. Couples the redox reaction to proton translocation (for every two electrons transferred, four hydrogen ions are translocated across the cytoplasmic membrane), and thus conserves the redox energy in a proton gradient. This subunit may bind ubiquinone. The polypeptide is NADH-quinone oxidoreductase subunit H (Paraburkholderia phytofirmans (strain DSM 17436 / LMG 22146 / PsJN) (Burkholderia phytofirmans)).